Here is a 1038-residue protein sequence, read N- to C-terminus: Translation initiation factor IF-2 (1038 aa).

The interval 48–426 (DALQGPGGNA…RQRRQEYEAM (379 aa)) is disordered. Over residues 58–87 (GKSAAKPGAPRKAAPAKPAAPSPAAAARPA) the composition is skewed to low complexity. Over residues 88 to 99 (APKPGAPAPKPA) the composition is skewed to pro residues. Positions 100–114 (EAPSSTPAAPSAPSA) are enriched in low complexity. Residues 115–125 (GPRPGPKPAPK) show a composition bias toward pro residues. Positions 126–141 (AAPVTPVPAAEFSAPA) are enriched in low complexity. A compositionally biased stretch (pro residues) spans 142–153 (PAQPAAPQPQAP). Positions 177-199 (DGGRDGGQRDGGRGGERGGDRPA) are enriched in basic and acidic residues. Residues 200–219 (RPAGQGAPRPGGARPAGPRP) are compositionally biased toward low complexity. The segment covering 261–277 (SGPGGAPRPQGGQGQGG) has biased composition (gly residues). A compositionally biased stretch (low complexity) spans 299–315 (GNRPNPGMMPQRPAAGP). Gly residues predominate over residues 319–406 (PGGGGRGPGG…GTQGAFGRPG (88 aa)). Basic residues predominate over residues 410 to 419 (RRGRKSKRQR). Residues 531–703 (SRPPVVTVMG…VVLTADASLD (173 aa)) form the tr-type G domain. The G1 stretch occupies residues 540–547 (GHVDHGKT). 540–547 (GHVDHGKT) provides a ligand contact to GTP. The segment at 565 to 569 (GITQH) is G2. The tract at residues 590-593 (DTPG) is G3. Residues 590–594 (DTPGH) and 644–647 (NKID) each bind GTP. The tract at residues 644–647 (NKID) is G4. Positions 680–682 (SAK) are G5.

It belongs to the TRAFAC class translation factor GTPase superfamily. Classic translation factor GTPase family. IF-2 subfamily.

The protein resides in the cytoplasm. One of the essential components for the initiation of protein synthesis. Protects formylmethionyl-tRNA from spontaneous hydrolysis and promotes its binding to the 30S ribosomal subunits. Also involved in the hydrolysis of GTP during the formation of the 70S ribosomal complex. The sequence is that of Translation initiation factor IF-2 from Streptomyces griseus subsp. griseus (strain JCM 4626 / CBS 651.72 / NBRC 13350 / KCC S-0626 / ISP 5235).